Consider the following 406-residue polypeptide: Paracaspase (406 aa).

A caspase-like region spans residues 193–374 (IGNSKYSQHR…TERKNNNIST (182 aa)). Catalysis depends on residues histidine 266 and cysteine 311.

This sequence belongs to the peptidase C14B family.

In terms of biological role, not required for DIF-induced autophagic cell death and necrotic cell death. In Dictyostelium discoideum (Social amoeba), this protein is Paracaspase (pcp).